The following is a 139-amino-acid chain: Small ribosomal subunit protein uS12 (139 aa).

Positions 12–55 (RVDKVKKSDSPALNKGYNSFKKSQTDVSSPQKRGVCTRVGTMTP) are disordered. Residues 27–42 (GYNSFKKSQTDVSSPQ) are compositionally biased toward polar residues. Asp102 carries the 3-methylthioaspartic acid modification. The disordered stretch occupies residues 119–139 (GVQNRMQGRSKYGTKKPKDKK). Positions 130 to 139 (YGTKKPKDKK) are enriched in basic residues.

This sequence belongs to the universal ribosomal protein uS12 family. In terms of assembly, part of the 30S ribosomal subunit. Contacts proteins S8 and S17. May interact with IF1 in the 30S initiation complex.

With S4 and S5 plays an important role in translational accuracy. Its function is as follows. Interacts with and stabilizes bases of the 16S rRNA that are involved in tRNA selection in the A site and with the mRNA backbone. Located at the interface of the 30S and 50S subunits, it traverses the body of the 30S subunit contacting proteins on the other side and probably holding the rRNA structure together. The combined cluster of proteins S8, S12 and S17 appears to hold together the shoulder and platform of the 30S subunit. The polypeptide is Small ribosomal subunit protein uS12 (Shouchella clausii (strain KSM-K16) (Alkalihalobacillus clausii)).